A 300-amino-acid chain; its full sequence is GTPase Era (300 aa).

An Era-type G domain is found at 7 to 182 (YCGFIAIVGR…LRKGVHHFPE (176 aa)). The G1 stretch occupies residues 15–22 (GRPNVGKS). 15-22 (GRPNVGKS) is a binding site for GTP. A G2 region spans residues 41–45 (QTTRH). Positions 62 to 65 (DTPG) are G3. GTP-binding positions include 62-66 (DTPGL) and 124-127 (NKVD). The interval 124 to 127 (NKVD) is G4. Residues 154-156 (ISA) are G5. The KH type-2 domain maps to 206 to 283 (TGEELPYSVT…HLELWVKVKS (78 aa)).

It belongs to the TRAFAC class TrmE-Era-EngA-EngB-Septin-like GTPase superfamily. Era GTPase family. In terms of assembly, monomer.

The protein resides in the cytoplasm. The protein localises to the cell inner membrane. Its function is as follows. An essential GTPase that binds both GDP and GTP, with rapid nucleotide exchange. Plays a role in 16S rRNA processing and 30S ribosomal subunit biogenesis and possibly also in cell cycle regulation and energy metabolism. This Histophilus somni (strain 129Pt) (Haemophilus somnus) protein is GTPase Era.